The chain runs to 268 residues: 3-methyl-2-oxobutanoate hydroxymethyltransferase (268 aa).

Asp46 and Asp85 together coordinate Mg(2+). Residues 46–47 (DS), Asp85, and Lys115 contribute to the 3-methyl-2-oxobutanoate site. A Mg(2+)-binding site is contributed by Glu117. Glu184 (proton acceptor) is an active-site residue.

The protein belongs to the PanB family. As to quaternary structure, homodecamer; pentamer of dimers. It depends on Mg(2+) as a cofactor.

Its subcellular location is the cytoplasm. It catalyses the reaction 3-methyl-2-oxobutanoate + (6R)-5,10-methylene-5,6,7,8-tetrahydrofolate + H2O = 2-dehydropantoate + (6S)-5,6,7,8-tetrahydrofolate. It participates in cofactor biosynthesis; (R)-pantothenate biosynthesis; (R)-pantoate from 3-methyl-2-oxobutanoate: step 1/2. Catalyzes the reversible reaction in which hydroxymethyl group from 5,10-methylenetetrahydrofolate is transferred onto alpha-ketoisovalerate to form ketopantoate. The polypeptide is 3-methyl-2-oxobutanoate hydroxymethyltransferase (Magnetococcus marinus (strain ATCC BAA-1437 / JCM 17883 / MC-1)).